A 127-amino-acid chain; its full sequence is Large ribosomal subunit protein bL19 (127 aa).

Belongs to the bacterial ribosomal protein bL19 family.

In terms of biological role, this protein is located at the 30S-50S ribosomal subunit interface and may play a role in the structure and function of the aminoacyl-tRNA binding site. The protein is Large ribosomal subunit protein bL19 of Bradyrhizobium sp. (strain BTAi1 / ATCC BAA-1182).